The sequence spans 218 residues: Cytochrome b6 (218 aa).

The chain crosses the membrane as a helical span at residues 35–55 (IFYCLGGITLVCFLIQFATGF). C38 contacts heme c. Heme b contacts are provided by H89 and H103. 3 helical membrane passes run 93–113 (ASMM…TGGF), 119–139 (LTWV…VTGY), and 189–209 (LHTF…FLMI). Residues H190 and H205 each coordinate heme b.

The protein belongs to the cytochrome b family. PetB subfamily. In terms of assembly, the 4 large subunits of the cytochrome b6-f complex are cytochrome b6, subunit IV (17 kDa polypeptide, PetD), cytochrome f and the Rieske protein, while the 4 small subunits are PetG, PetL, PetM and PetN. The complex functions as a dimer. Requires heme b as cofactor. It depends on heme c as a cofactor.

Its subcellular location is the cellular thylakoid membrane. Its function is as follows. Component of the cytochrome b6-f complex, which mediates electron transfer between photosystem II (PSII) and photosystem I (PSI), cyclic electron flow around PSI, and state transitions. The protein is Cytochrome b6 of Synechococcus sp. (strain WH7803).